An 85-amino-acid polypeptide reads, in one-letter code: Small ribosomal subunit protein uS17 (85 aa).

Belongs to the universal ribosomal protein uS17 family. Part of the 30S ribosomal subunit.

One of the primary rRNA binding proteins, it binds specifically to the 5'-end of 16S ribosomal RNA. This is Small ribosomal subunit protein uS17 from Geobacter metallireducens (strain ATCC 53774 / DSM 7210 / GS-15).